A 459-amino-acid chain; its full sequence is MKPVETENRKVVVVGLGKSGLATARFLLRRGALVTITDQASEARLGDLVVSARDLGATLELGGHQDSTFLSADYIVVSPGVPETLAPLKKAAEKGIPVMGEMELAARFVTKPVAAVTGTNGKTTVTTLLGDMLKASGRQVFVGGNIGAPLIGFADKGENADMAVVEVSSFQLDTSETFRPHVAVLLNIAEDHLARYVDFNAYVRSKGRIFENQEADDVAVINGADFHVLQASKGIRSRKLTFNAGKNTQDGAVIGDTAVEIVTAGTKTATISVTSPLMRARHNMENIAAATLAALAMGATVEGIQAAVDGFQGLRHRLEYVASIDDVHYFDDSKATNPDAVRRALEFFTSRVVLLLGGEDKGCDYGVLKNVIRERARAVVLFGAAKEKIRMAINGSVSLWDAGSMAEAVRRAHELAAPGDAVLLSPACSSFDSYESYAHRGDDFCNAVKKLKEGDHARG.

G118–T124 contacts ATP.

This sequence belongs to the MurCDEF family.

The protein localises to the cytoplasm. The catalysed reaction is UDP-N-acetyl-alpha-D-muramoyl-L-alanine + D-glutamate + ATP = UDP-N-acetyl-alpha-D-muramoyl-L-alanyl-D-glutamate + ADP + phosphate + H(+). It participates in cell wall biogenesis; peptidoglycan biosynthesis. Functionally, cell wall formation. Catalyzes the addition of glutamate to the nucleotide precursor UDP-N-acetylmuramoyl-L-alanine (UMA). In Desulfosudis oleivorans (strain DSM 6200 / JCM 39069 / Hxd3) (Desulfococcus oleovorans), this protein is UDP-N-acetylmuramoylalanine--D-glutamate ligase.